A 92-amino-acid polypeptide reads, in one-letter code: Small ribosomal subunit protein uS19 (92 aa).

The protein belongs to the universal ribosomal protein uS19 family.

Protein S19 forms a complex with S13 that binds strongly to the 16S ribosomal RNA. The protein is Small ribosomal subunit protein uS19 of Mycoplasmopsis agalactiae (strain NCTC 10123 / CIP 59.7 / PG2) (Mycoplasma agalactiae).